Reading from the N-terminus, the 115-residue chain is Dolichyl-diphosphooligosaccharide--protein glycosyltransferase subunit DAD2 (115 aa).

The Cytoplasmic portion of the chain corresponds to 1-31 (MVKSTSKDAQDLFHSLHSAYTATPTNLKIID). The chain crosses the membrane as a helical span at residues 32 to 52 (LYVCFAVFTALIQVAYMALVG). At 53–55 (SFP) the chain is on the lumenal side. The chain crosses the membrane as a helical span at residues 56–76 (FNSFLSGVLSCIGTAVLAVCL). The Cytoplasmic segment spans residues 77 to 94 (RIQVNKENKEFKDLAPER). A helical membrane pass occupies residues 95–115 (AFADFVLCNLVLHLVIINFLG).

This sequence belongs to the DAD/OST2 family. As to quaternary structure, component of the oligosaccharyltransferase (OST) complex.

It is found in the endoplasmic reticulum membrane. It functions in the pathway protein modification; protein glycosylation. Its function is as follows. Subunit of the oligosaccharyl transferase (OST) complex that catalyzes the initial transfer of a defined glycan (Glc(3)Man(9)GlcNAc(2) in eukaryotes) from the lipid carrier dolichol-pyrophosphate to an asparagine residue within an Asn-X-Ser/Thr consensus motif in nascent polypeptide chains, the first step in protein N-glycosylation. N-glycosylation occurs cotranslationally and the complex associates with the Sec61 complex at the channel-forming translocon complex that mediates protein translocation across the endoplasmic reticulum (ER). All subunits are required for a maximal enzyme activity. The sequence is that of Dolichyl-diphosphooligosaccharide--protein glycosyltransferase subunit DAD2 (DAD2) from Arabidopsis thaliana (Mouse-ear cress).